We begin with the raw amino-acid sequence, 179 residues long: Large ribosomal subunit protein uL6 (179 aa).

This sequence belongs to the universal ribosomal protein uL6 family. As to quaternary structure, part of the 50S ribosomal subunit.

Its function is as follows. This protein binds to the 23S rRNA, and is important in its secondary structure. It is located near the subunit interface in the base of the L7/L12 stalk, and near the tRNA binding site of the peptidyltransferase center. The protein is Large ribosomal subunit protein uL6 of Mycobacterium leprae (strain Br4923).